Reading from the N-terminus, the 1069-residue chain is Kinesin-like protein vab-8 (1069 aa).

The region spanning 15 to 325 is the Kinesin motor domain; sequence PLRTIPKLRL…ACKIARTRVK (311 aa). Disordered stretches follow at residues 328-374, 391-436, and 572-598; these read MGHG…LESG, SRTT…KSSP, and EQEEESMRTSTATTGGSKKDHPLRILS. 2 interaction with unc-51 regions span residues 331–517 and 517–719; these read GRKP…KSKY and YNLD…TVVD. 2 stretches are compositionally biased toward low complexity: residues 339-364 and 391-407; these read SSGTMDSNGSSSSFGTTTITPGGTPR and SRTTSPASTTMPSTPTS. The interaction with unc-73 stretch occupies residues 403-877; it reads STPTSIRPLH…SAERDRKTSK (475 aa). Residues 719 to 769 are a coiled coil; sequence DWSQIERKKEREKDAMEEEKRKEVLRERRAKLKITELEIKRERNMIDKELD. Residues 786-960 form a disordered region; the sequence is SLSPCRGGRT…RQSYSASSGY (175 aa). Over residues 824–847 the composition is skewed to low complexity; that stretch reads GGSLAKLSASGASGSGPPSSPSLG. Positions 883-897 are enriched in basic and acidic residues; sequence SSKERRSSGSKEELQ. Positions 906–928 are enriched in low complexity; it reads TSPKTYGGPGTSSSGRGSSAPGS. A compositionally biased stretch (polar residues) spans 938 to 960; sequence TEKTANGTMPRSKRQSYSASSGY. Residues 990–1027 are a coiled coil; the sequence is LVRQADEIRHRQWQLKKELEEAKRAIGQEEDAKMIANS.

It belongs to the TRAFAC class myosin-kinesin ATPase superfamily. Kinesin family. KIF26 subfamily. Interacts with unc-51 and unc-73. Phosphorylated by unc-51.

It localises to the cytoplasm. It is found in the cytoskeleton. Its function is as follows. Required for posterior migration of cells and axon growth cones during nervous system assembly. In PLM neuron, regulates innexin unc-9 gap junction turnover by suppressing unc-9 transport out of the gap junctions. This is Kinesin-like protein vab-8 (vab-8) from Caenorhabditis briggsae.